The sequence spans 93 residues: Large ribosomal subunit protein uL23 (93 aa).

Belongs to the universal ribosomal protein uL23 family. Part of the 50S ribosomal subunit. Contacts protein L29, and trigger factor when it is bound to the ribosome.

In terms of biological role, one of the early assembly proteins it binds 23S rRNA. One of the proteins that surrounds the polypeptide exit tunnel on the outside of the ribosome. Forms the main docking site for trigger factor binding to the ribosome. In Natranaerobius thermophilus (strain ATCC BAA-1301 / DSM 18059 / JW/NM-WN-LF), this protein is Large ribosomal subunit protein uL23.